The sequence spans 367 residues: tRNA pseudouridine synthase D (367 aa).

The active-site Nucleophile is the aspartate 78. One can recognise a TRUD domain in the interval 153 to 300 (GVPNYFGEQR…KQERRRIRLT (148 aa)).

It belongs to the pseudouridine synthase TruD family.

The enzyme catalyses uridine(13) in tRNA = pseudouridine(13) in tRNA. Functionally, responsible for synthesis of pseudouridine from uracil-13 in transfer RNAs. In Colwellia psychrerythraea (strain 34H / ATCC BAA-681) (Vibrio psychroerythus), this protein is tRNA pseudouridine synthase D.